Here is a 311-residue protein sequence, read N- to C-terminus: tRNA dimethylallyltransferase (311 aa).

ATP is bound at residue 13–20 (GPTASGKT). 15-20 (TASGKT) is a substrate binding site. 2 interaction with substrate tRNA regions span residues 38-41 (DSMQ) and 166-170 (QRVLR).

The protein belongs to the IPP transferase family. As to quaternary structure, monomer. Mg(2+) is required as a cofactor.

The enzyme catalyses adenosine(37) in tRNA + dimethylallyl diphosphate = N(6)-dimethylallyladenosine(37) in tRNA + diphosphate. Catalyzes the transfer of a dimethylallyl group onto the adenine at position 37 in tRNAs that read codons beginning with uridine, leading to the formation of N6-(dimethylallyl)adenosine (i(6)A). This chain is tRNA dimethylallyltransferase, found in Staphylococcus aureus (strain MRSA252).